A 706-amino-acid chain; its full sequence is Fatty acid oxidation complex subunit alpha (706 aa).

The segment at 1–188 is enoyl-CoA hydratase; sequence MEKTFNLTRR…KMGLVNDVVP (188 aa). A 3-hydroxyacyl-CoA dehydrogenase region spans residues 308-706; the sequence is RKVKKAVILG…TMAQENAHFF (399 aa).

The protein in the N-terminal section; belongs to the enoyl-CoA hydratase/isomerase family. It in the central section; belongs to the 3-hydroxyacyl-CoA dehydrogenase family. Heterotetramer of two alpha chains (FadJ) and two beta chains (FadI).

Its subcellular location is the cytoplasm. The catalysed reaction is a (3S)-3-hydroxyacyl-CoA = a (2E)-enoyl-CoA + H2O. It catalyses the reaction a 4-saturated-(3S)-3-hydroxyacyl-CoA = a (3E)-enoyl-CoA + H2O. The enzyme catalyses a (3S)-3-hydroxyacyl-CoA + NAD(+) = a 3-oxoacyl-CoA + NADH + H(+). It carries out the reaction (3S)-3-hydroxybutanoyl-CoA = (3R)-3-hydroxybutanoyl-CoA. It functions in the pathway lipid metabolism; fatty acid beta-oxidation. Its function is as follows. Catalyzes the formation of a hydroxyacyl-CoA by addition of water on enoyl-CoA. Also exhibits 3-hydroxyacyl-CoA epimerase and 3-hydroxyacyl-CoA dehydrogenase activities. This is Fatty acid oxidation complex subunit alpha from Shewanella baltica (strain OS155 / ATCC BAA-1091).